We begin with the raw amino-acid sequence, 351 residues long: Glucan endo-1,3-beta-glucosidase (351 aa).

The N-terminal stretch at 1–32 (MALWYLFNKRSLGAAVLILVGLLMCNIQITGA) is a signal peptide. Gln33 is subject to Pyrrolidone carboxylic acid. 2 N-linked (GlcNAc...) asparagine glycosylation sites follow: Asn79 and Asn99. Glu128 (proton donor) is an active-site residue. N-linked (GlcNAc...) asparagine glycosylation is present at Asn235. The Nucleophile role is filled by Glu268.

The protein belongs to the glycosyl hydrolase 17 family. In terms of processing, glycosylated. The N-terminus is blocked.

The protein localises to the secreted. The protein resides in the extracellular space. It localises to the extracellular matrix. It carries out the reaction Hydrolysis of (1-&gt;3)-beta-D-glucosidic linkages in (1-&gt;3)-beta-D-glucans.. Functionally, implicated in the defense of plants against pathogens. In Nicotiana tabacum (Common tobacco), this protein is Glucan endo-1,3-beta-glucosidase (SP41B).